Reading from the N-terminus, the 452-residue chain is MEKDYLRISSTVLVSLLFGLALVLVNSWFNQPGVEEVVPRSTYLMVMIALFFIDTVAFIFMQLYFIYDRRQFSNCVLSLAFLSCLIYFVITVIIIQQIIEERLTSSVVQNDIAIYYLFRQMSLCILIFLALVNKVSENTKQRNLFSKKMTLCISLFFVFGGPIVAHILSSHYESYNLHIAELTNENGQVVWKASYVTIMIFMWLTLLSVNLYFNGLRYDIWNGVTVIAFCAVLYNISLLFMSRYSVSTWYISRTIEVVSKLTVMVIFMCHIFSALRVTKNIAHRDPLTNIFNRNYFFNELTVQSASAQKTPYCVMIMDIDHFKKVNDTWGHPVGDQVIKTVVNIIGKSIRPDDLLARVGGEEFGVLLTDIDTERAKALAERIRENVERLTGDNPEYAIPQKVTISIGAVVTQENALNPNEIYRLADNALYEAKETGRNKVVVRDVVNFCESP.

Over 1–7 (MEKDYLR) the chain is Cytoplasmic. The chain crosses the membrane as a helical span at residues 8–28 (ISSTVLVSLLFGLALVLVNSW). The Periplasmic portion of the chain corresponds to 29–45 (FNQPGVEEVVPRSTYLM). A helical membrane pass occupies residues 46–66 (VMIALFFIDTVAFIFMQLYFI). Topologically, residues 67–74 (YDRRQFSN) are cytoplasmic. Residues 75–95 (CVLSLAFLSCLIYFVITVIII) traverse the membrane as a helical segment. The Periplasmic portion of the chain corresponds to 96-111 (QQIIEERLTSSVVQND). Residues 112–132 (IAIYYLFRQMSLCILIFLALV) form a helical membrane-spanning segment. Residues 133–148 (NKVSENTKQRNLFSKK) lie on the Cytoplasmic side of the membrane. A helical membrane pass occupies residues 149–169 (MTLCISLFFVFGGPIVAHILS). Residues 170 to 195 (SHYESYNLHIAELTNENGQVVWKASY) lie on the Periplasmic side of the membrane. Residues 196 to 216 (VTIMIFMWLTLLSVNLYFNGL) traverse the membrane as a helical segment. The Cytoplasmic segment spans residues 217–219 (RYD). The helical transmembrane segment at 220–240 (IWNGVTVIAFCAVLYNISLLF) threads the bilayer. The Periplasmic segment spans residues 241–254 (MSRYSVSTWYISRT). The helical transmembrane segment at 255–275 (IEVVSKLTVMVIFMCHIFSAL) threads the bilayer. Residues 276–452 (RVTKNIAHRD…RDVVNFCESP (177 aa)) lie on the Cytoplasmic side of the membrane. A GGDEF domain is found at 310 to 445 (TPYCVMIMDI…GRNKVVVRDV (136 aa)). Mg(2+)-binding residues include Asp318 and Ile319. The substrate site is built by Asn326, His331, and Asp335. Residue Glu361 participates in Mg(2+) binding. Glu361 serves as the catalytic Proton acceptor. Arg381 lines the substrate pocket.

Homodimer. The cofactor is Mg(2+).

Its subcellular location is the cell inner membrane. It catalyses the reaction 2 GTP = 3',3'-c-di-GMP + 2 diphosphate. It functions in the pathway purine metabolism; 3',5'-cyclic di-GMP biosynthesis. Probably catalyzes the synthesis of cyclic-di-GMP (c-di-GMP) via the condensation of 2 GTP molecules. Overexpression leads to a strong repression of swimming; swimming returns to normal when residues 359-360 are both mutated to Ala. Overexpression also leads to a 20-fold increase in c-di-GMP levels in vivo. Cyclic-di-GMP is a second messenger which controls cell surface-associated traits in bacteria. The sequence is that of Probable diguanylate cyclase DgcT from Escherichia coli (strain K12).